The primary structure comprises 120 residues: NAD(P)H-quinone oxidoreductase subunit 3, chloroplastic (120 aa).

3 consecutive transmembrane segments (helical) span residues 10–30, 64–84, and 89–109; these read FLVF…ASKL, MFAL…PWAV, and MGFI…VGLV.

It belongs to the complex I subunit 3 family. NDH is composed of at least 16 different subunits, 5 of which are encoded in the nucleus.

The protein localises to the plastid. Its subcellular location is the chloroplast thylakoid membrane. It carries out the reaction a plastoquinone + NADH + (n+1) H(+)(in) = a plastoquinol + NAD(+) + n H(+)(out). The catalysed reaction is a plastoquinone + NADPH + (n+1) H(+)(in) = a plastoquinol + NADP(+) + n H(+)(out). NDH shuttles electrons from NAD(P)H:plastoquinone, via FMN and iron-sulfur (Fe-S) centers, to quinones in the photosynthetic chain and possibly in a chloroplast respiratory chain. The immediate electron acceptor for the enzyme in this species is believed to be plastoquinone. Couples the redox reaction to proton translocation, and thus conserves the redox energy in a proton gradient. This chain is NAD(P)H-quinone oxidoreductase subunit 3, chloroplastic, found in Chlorokybus atmophyticus (Soil alga).